A 527-amino-acid polypeptide reads, in one-letter code: Ribonuclease Y 2 (527 aa).

Residues 2–22 (IAMIATAIIGIVAGGGLGWAL) traverse the membrane as a helical segment. In terms of domain architecture, HD spans 339–432 (QYFHCGEVGW…VIAADAVSGA (94 aa)).

Belongs to the RNase Y family.

It localises to the cell membrane. Functionally, endoribonuclease that initiates mRNA decay. This chain is Ribonuclease Y 2, found in Bdellovibrio bacteriovorus (strain ATCC 15356 / DSM 50701 / NCIMB 9529 / HD100).